A 112-amino-acid chain; its full sequence is MGKKENQLYEGAYVFSVTLSEEARRKALDKVISGITNYGGEIHKIHDQGRKKLAYTIRGAREGYYYFIYFSVSPGAITELWKEYHLNEDLLRFMTLRADSVKEVLEFASLPE.

It belongs to the bacterial ribosomal protein bS6 family.

Binds together with bS18 to 16S ribosomal RNA. The chain is Small ribosomal subunit protein bS6 (rpsF) from Chlamydia pneumoniae (Chlamydophila pneumoniae).